Reading from the N-terminus, the 431-residue chain is D-tagatose-1,6-bisphosphate aldolase subunit KbaZ (431 aa).

Belongs to the GatZ/KbaZ family. KbaZ subfamily. Forms a complex with KbaY.

It participates in carbohydrate metabolism; D-tagatose 6-phosphate degradation; D-glyceraldehyde 3-phosphate and glycerone phosphate from D-tagatose 6-phosphate: step 2/2. In terms of biological role, component of the tagatose-1,6-bisphosphate aldolase KbaYZ that is required for full activity and stability of the Y subunit. Could have a chaperone-like function for the proper and stable folding of KbaY. When expressed alone, KbaZ does not show any aldolase activity. The chain is D-tagatose-1,6-bisphosphate aldolase subunit KbaZ from Salmonella arizonae (strain ATCC BAA-731 / CDC346-86 / RSK2980).